We begin with the raw amino-acid sequence, 877 residues long: Alanine--tRNA ligase (877 aa).

The Zn(2+) site is built by H567, H571, C669, and H673.

This sequence belongs to the class-II aminoacyl-tRNA synthetase family. It depends on Zn(2+) as a cofactor.

The protein localises to the cytoplasm. It carries out the reaction tRNA(Ala) + L-alanine + ATP = L-alanyl-tRNA(Ala) + AMP + diphosphate. Catalyzes the attachment of alanine to tRNA(Ala) in a two-step reaction: alanine is first activated by ATP to form Ala-AMP and then transferred to the acceptor end of tRNA(Ala). Also edits incorrectly charged Ser-tRNA(Ala) and Gly-tRNA(Ala) via its editing domain. This Rickettsia rickettsii (strain Iowa) protein is Alanine--tRNA ligase.